We begin with the raw amino-acid sequence, 1297 residues long: Outer capsid protein VP1 (1297 aa).

Belongs to the aquareoviridae outer capsid VP1 protein family.

Its subcellular location is the virion. It carries out the reaction a 5'-end diphospho-ribonucleoside in mRNA + GTP + H(+) = a 5'-end (5'-triphosphoguanosine)-ribonucleoside in mRNA + diphosphate. The catalysed reaction is a 5'-end (5'-triphosphoguanosine)-ribonucleoside in mRNA + S-adenosyl-L-methionine = a 5'-end (N(7)-methyl 5'-triphosphoguanosine)-ribonucleoside in mRNA + S-adenosyl-L-homocysteine. Its function is as follows. Outer capsid protein involved in mRNA capping. Catalyzes the last 3 enzymatic activities for formation of the 5' cap structure on the viral plus-strand transcripts, namely the RNA guanylyltransferase, RNA-7N- and RNA-2'O-methyltransferase activities. The protein is Outer capsid protein VP1 (S1) of Oncorhynchus keta (Chum salmon).